Consider the following 877-residue polypeptide: Alanine--tRNA ligase (877 aa).

H565, H569, C667, and H671 together coordinate Zn(2+).

It belongs to the class-II aminoacyl-tRNA synthetase family. The cofactor is Zn(2+).

It is found in the cytoplasm. It carries out the reaction tRNA(Ala) + L-alanine + ATP = L-alanyl-tRNA(Ala) + AMP + diphosphate. Functionally, catalyzes the attachment of alanine to tRNA(Ala) in a two-step reaction: alanine is first activated by ATP to form Ala-AMP and then transferred to the acceptor end of tRNA(Ala). Also edits incorrectly charged Ser-tRNA(Ala) and Gly-tRNA(Ala) via its editing domain. The polypeptide is Alanine--tRNA ligase (Acidithiobacillus ferridurans).